A 443-amino-acid polypeptide reads, in one-letter code: Thymidine phosphorylase (443 aa).

Belongs to the thymidine/pyrimidine-nucleoside phosphorylase family. In terms of assembly, homodimer.

It catalyses the reaction thymidine + phosphate = 2-deoxy-alpha-D-ribose 1-phosphate + thymine. The protein operates within pyrimidine metabolism; dTMP biosynthesis via salvage pathway; dTMP from thymine: step 1/2. The enzymes which catalyze the reversible phosphorolysis of pyrimidine nucleosides are involved in the degradation of these compounds and in their utilization as carbon and energy sources, or in the rescue of pyrimidine bases for nucleotide synthesis. The protein is Thymidine phosphorylase of Aeromonas hydrophila subsp. hydrophila (strain ATCC 7966 / DSM 30187 / BCRC 13018 / CCUG 14551 / JCM 1027 / KCTC 2358 / NCIMB 9240 / NCTC 8049).